The chain runs to 319 residues: Probable cytochrome c oxidase subunit 2 (319 aa).

The signal sequence occupies residues 1–33 (MSPNGSDRSPRRPMRRKLLQALTAGLVLATATG). 2 helical membrane-spanning segments follow: residues 63-83 (WAAA…SVFF) and 101-121 (LPIE…LFYF). Residues H227, C262, C266, and H270 each coordinate Cu cation.

The protein belongs to the cytochrome c oxidase subunit 2 family. Cu cation is required as a cofactor. Heme serves as cofactor.

The protein resides in the cell membrane. It carries out the reaction 4 Fe(II)-[cytochrome c] + O2 + 8 H(+)(in) = 4 Fe(III)-[cytochrome c] + 2 H2O + 4 H(+)(out). Subunits I and II form the functional core of the enzyme complex. Electrons originating in cytochrome c are transferred via heme a and Cu(A) to the binuclear center formed by heme a3 and Cu(B). The sequence is that of Probable cytochrome c oxidase subunit 2 (ctaC) from Streptomyces coelicolor (strain ATCC BAA-471 / A3(2) / M145).